Reading from the N-terminus, the 227-residue chain is Orotidine 5'-phosphate decarboxylase (227 aa).

Residues aspartate 12, lysine 34, 61–70 (DLKLHDIPNT), threonine 117, arginine 178, glutamine 187, glycine 207, and arginine 208 contribute to the substrate site. Lysine 63 acts as the Proton donor in catalysis.

Belongs to the OMP decarboxylase family. Type 1 subfamily. As to quaternary structure, homodimer.

The catalysed reaction is orotidine 5'-phosphate + H(+) = UMP + CO2. It participates in pyrimidine metabolism; UMP biosynthesis via de novo pathway; UMP from orotate: step 2/2. Its function is as follows. Catalyzes the decarboxylation of orotidine 5'-monophosphate (OMP) to uridine 5'-monophosphate (UMP). In Anaeromyxobacter sp. (strain K), this protein is Orotidine 5'-phosphate decarboxylase.